Reading from the N-terminus, the 115-residue chain is Large ribosomal subunit protein bL19 (115 aa).

It belongs to the bacterial ribosomal protein bL19 family.

Its function is as follows. This protein is located at the 30S-50S ribosomal subunit interface and may play a role in the structure and function of the aminoacyl-tRNA binding site. In Nitratidesulfovibrio vulgaris (strain DSM 19637 / Miyazaki F) (Desulfovibrio vulgaris), this protein is Large ribosomal subunit protein bL19.